Reading from the N-terminus, the 202-residue chain is MIDYVSGTLVDKTTDSALVDVNGLGYRVHVPTSTYKRLPDTDEEVTLHTYHYLREDDESLYGFATKAERTVFETMTGVSRVGPKLALSALSAMTPTELRDHVMEGDKSRLTQISGVGTKTADRLIVELRDRLADLDVLEDTSPLSGGSDARAEARADALEALTELGLSKADAERSIRQVLRDNAGIQSADELVRRALKADQE.

The segment at 1-64 (MIDYVSGTLV…EDDESLYGFA (64 aa)) is domain I. The interval 65-143 (TKAERTVFET…DLDVLEDTSP (79 aa)) is domain II. The segment at 144–149 (LSGGSD) is flexible linker. The tract at residues 150-202 (ARAEARADALEALTELGLSKADAERSIRQVLRDNAGIQSADELVRRALKADQE) is domain III.

Belongs to the RuvA family. In terms of assembly, homotetramer. Forms an RuvA(8)-RuvB(12)-Holliday junction (HJ) complex. HJ DNA is sandwiched between 2 RuvA tetramers; dsDNA enters through RuvA and exits via RuvB. An RuvB hexamer assembles on each DNA strand where it exits the tetramer. Each RuvB hexamer is contacted by two RuvA subunits (via domain III) on 2 adjacent RuvB subunits; this complex drives branch migration. In the full resolvosome a probable DNA-RuvA(4)-RuvB(12)-RuvC(2) complex forms which resolves the HJ.

The protein resides in the cytoplasm. The RuvA-RuvB-RuvC complex processes Holliday junction (HJ) DNA during genetic recombination and DNA repair, while the RuvA-RuvB complex plays an important role in the rescue of blocked DNA replication forks via replication fork reversal (RFR). RuvA specifically binds to HJ cruciform DNA, conferring on it an open structure. The RuvB hexamer acts as an ATP-dependent pump, pulling dsDNA into and through the RuvAB complex. HJ branch migration allows RuvC to scan DNA until it finds its consensus sequence, where it cleaves and resolves the cruciform DNA. The protein is Holliday junction branch migration complex subunit RuvA of Salinibacter ruber (strain DSM 13855 / M31).